Here is a 711-residue protein sequence, read N- to C-terminus: Polyribonucleotide nucleotidyltransferase (711 aa).

2 residues coordinate Mg(2+): D486 and D492. In terms of domain architecture, KH spans 553–612 (PRIHTIKISTDKIKDVIGKGGSVIRALTEETGTTIEIEDDGTVKIAATDGEKAKYAIRRI). The region spanning 622-690 (GRIYNSKVTR…RQGRVRLSIK (69 aa)) is the S1 motif domain. Residues 689–711 (IKEATEQSQPAAAPEAPASEQAE) form a disordered region. Low complexity predominate over residues 694–711 (EQSQPAAAPEAPASEQAE).

Belongs to the polyribonucleotide nucleotidyltransferase family. As to quaternary structure, component of the RNA degradosome, which is a multiprotein complex involved in RNA processing and mRNA degradation. The cofactor is Mg(2+).

The protein localises to the cytoplasm. The enzyme catalyses RNA(n+1) + phosphate = RNA(n) + a ribonucleoside 5'-diphosphate. In terms of biological role, involved in mRNA degradation. Catalyzes the phosphorolysis of single-stranded polyribonucleotides processively in the 3'- to 5'-direction. This is Polyribonucleotide nucleotidyltransferase from Salmonella typhi.